Reading from the N-terminus, the 204-residue chain is High frequency lysogenization protein HflD homolog (204 aa).

Belongs to the HflD family.

The protein resides in the cytoplasm. It is found in the cell inner membrane. The protein is High frequency lysogenization protein HflD homolog of Stenotrophomonas maltophilia (strain R551-3).